Consider the following 568-residue polypeptide: Glycine--tRNA ligase (568 aa).

The substrate site is built by Arg-97 and Glu-163. Residues 195-197, 205-210, 322-323, and 441-444 contribute to the ATP site; these read RNE, IRLREF, EC, and GIDR. 210-214 contacts substrate; that stretch reads FTQAE. 437-441 provides a ligand contact to substrate; sequence EPSFG.

This sequence belongs to the class-II aminoacyl-tRNA synthetase family.

It localises to the cytoplasm. It carries out the reaction tRNA(Gly) + glycine + ATP = glycyl-tRNA(Gly) + AMP + diphosphate. In terms of biological role, catalyzes the attachment of glycine to tRNA(Gly). This Pyrococcus furiosus (strain ATCC 43587 / DSM 3638 / JCM 8422 / Vc1) protein is Glycine--tRNA ligase.